Reading from the N-terminus, the 421-residue chain is ATP-dependent RNA helicase RhlB (421 aa).

Residues 9–37 (QKFSDFALHPQVVEALEKKGFYNCTPIQA) carry the Q motif motif. A Helicase ATP-binding domain is found at 40–219 (LPLTLAGRDV…FEQMNNAEYV (180 aa)). Residue 53-60 (AQTGTGKT) coordinates ATP. The short motif at 165-168 (DEAD) is the DEAD box element. Residues 245-390 (RLLQTLIEEE…VSKYNPEALM (146 aa)) enclose the Helicase C-terminal domain. The interval 396-421 (PLRLTRSRPGNGPRRAGAPRNRRRSG) is disordered. Residues 402–414 (SRPGNGPRRAGAP) are compositionally biased toward low complexity.

The protein belongs to the DEAD box helicase family. RhlB subfamily. In terms of assembly, component of the RNA degradosome, which is a multiprotein complex involved in RNA processing and mRNA degradation.

It is found in the cytoplasm. The catalysed reaction is ATP + H2O = ADP + phosphate + H(+). Its function is as follows. DEAD-box RNA helicase involved in RNA degradation. Has RNA-dependent ATPase activity and unwinds double-stranded RNA. The sequence is that of ATP-dependent RNA helicase RhlB from Salmonella paratyphi A (strain AKU_12601).